The primary structure comprises 179 residues: Ubiquitin-conjugating enzyme E2 C (179 aa).

The disordered stretch occupies residues Met-1 to Val-31. Ala-2 carries the N-acetylalanine modification. Ser-3 is modified (phosphoserine). Positions Pro-30–Ser-175 constitute a UBC core domain. Cys-114 functions as the Glycyl thioester intermediate in the catalytic mechanism.

It belongs to the ubiquitin-conjugating enzyme family. Component of the APC/C complex, composed of at least 14 distinct subunits that assemble into a complex of at least 19 chains with a combined molecular mass of around 1.2 MDa. Within this complex, directly interacts with ANAPC2. Autoubiquitinated by the APC/C complex, leading to its degradation by the proteasome. Its degradation plays a central role in APC/C regulation, allowing cyclin-A accumulation before S phase entry. APC/C substrates inhibit the autoubiquitination of UBE2C/UBCH10 but not its E2 function, hence APC/C remaining active until its substrates have been destroyed.

The catalysed reaction is S-ubiquitinyl-[E1 ubiquitin-activating enzyme]-L-cysteine + [E2 ubiquitin-conjugating enzyme]-L-cysteine = [E1 ubiquitin-activating enzyme]-L-cysteine + S-ubiquitinyl-[E2 ubiquitin-conjugating enzyme]-L-cysteine.. It catalyses the reaction S-ubiquitinyl-[E1 ubiquitin-activating enzyme]-L-cysteine + [acceptor protein]-L-lysine = [E1 ubiquitin-activating enzyme]-L-cysteine + N(6)-monoubiquitinyl-[acceptor protein]-L-lysine.. The protein operates within protein modification; protein ubiquitination. Accepts ubiquitin from the E1 complex and catalyzes its covalent attachment to other proteins. In vitro catalyzes 'Lys-11'- and 'Lys-48'-linked polyubiquitination. Acts as an essential factor of the anaphase promoting complex/cyclosome (APC/C), a cell cycle-regulated ubiquitin ligase that controls progression through mitosis. Acts by initiating 'Lys-11'-linked polyubiquitin chains on APC/C substrates, leading to the degradation of APC/C substrates by the proteasome and promoting mitotic exit. The polypeptide is Ubiquitin-conjugating enzyme E2 C (UBE2C) (Bos taurus (Bovine)).